A 759-amino-acid polypeptide reads, in one-letter code: Cullin-4A (759 aa).

The interval 1–40 (MADEGPRKGSVSALMGRTNGLTKPAALAGGPAKPGGTGGS) is disordered. Residue Lys-8 forms a Glycyl lysine isopeptide (Lys-Gly) (interchain with G-Cter in SUMO2) linkage. Ser-10 bears the Phosphoserine mark. Residues 20 to 31 (GLTKPAALAGGP) show a composition bias toward low complexity. Lys-33 is covalently cross-linked (Glycyl lysine isopeptide (Lys-Gly) (interchain with G-Cter in ubiquitin)). In terms of domain architecture, Cullin neddylation spans 691 to 750 (DRQYQIDAAIVRIMKMRKTLGHNLLVSELYNQLKFPVKPGDLKKRIESLIDRDYMERDKD). Residue Lys-705 forms a Glycyl lysine isopeptide (Lys-Gly) (interchain with G-Cter in NEDD8) linkage.

It belongs to the cullin family. As to quaternary structure, can self-associate. Component of multiple DCX (DDB1-CUL4-X-box) E3 ubiquitin-protein ligase complexes that seem to consist of DDB1, CUL4A or CUL4B, RBX1 and a variable substrate recognition component which seems to belong to a protein family described as DCAF (Ddb1- and Cul4-associated factor) or CDW (CUL4-DDB1-associated WD40-repeat) proteins. Component of the CSA complex (DCX(ERCC8) complex) containing ERCC8, RBX1, DDB1 and CUL4A; the CSA complex interacts with RNA polymerase II; upon UV irradiation it interacts with the COP9 signalosome and preferentially with the hyperphosphorylated form of RNA polymerase II. Component of the DCX(DET1-COP1) complex with the substrate recognition component DET1 and COP1. Component of the DCX(DDB2) complex with the substrate recognition component DDB2. Component of the DCX(DTL) complex with the putative substrate recognition component DTL. Component of DCX complexes part of the DesCEND (destruction via C-end degrons) pathway, which contain either TRPC4AP or DCAF12 as substrate-recognition component. Component of the DCX(AMBRA1) complex with the substrate recognition component AMBRA1. Interacts with DDB1, RBX1, RNF7, CDT1, TIP120A/CAND1, SKP2, CDKN1B, MDM2, TP53 and HOXA9. Interacts with DDB2; the interactions with DDB2 and CAND1 are mutually exclusive. Interacts with DCAF1, DTL, DDA1, DCAF6, DCAF4, DCAF16, DCAF17, DET1, WDTC1, DCAF5, DCAF11, WDR24A, COP1, PAFAH1B1, ERCC8, GRWD1, FBXW5, RBBP7, GNB2, WSB1, WSB2, NUP43, PWP1, FBXW8, ATG16L1, KATNB1, RBBP4, RBBP5, LRWD1 and DCAF8. May interact with WDR26, WDR51B, SNRNP40, WDR61, WDR76, WDR5. Interacts (when neddylated) with ARIH1; leading to activate the E3 ligase activity of ARIH1. The DDB1-CUL4A complex interacts with CRY1. Interacts (unneddylated form) with DCUN1D1, DCUN1D2, DCUN1D3, DCUN1D4 and DCUN1D5; these interactions promote the cullin neddylation. (Microbial infection) Interacts with murine cytomegalovirus M48. Neddylated; required for activity of cullin-RING-based E3 ubiquitin-protein ligase complexes. Deneddylated via its interaction with the COP9 signalosome (CSN) complex. Post-translationally, (Microbial infection) Deneddylated by murine cytomegalovirus M48 leading to a S-phase-like environment that is required for efficient replication of the viral genome. In terms of tissue distribution, expressed in oocytes (at protein level). In the ovary, also expressed in cumulus cells. Expressed in testis, spleen and kidney.

It functions in the pathway protein modification; protein ubiquitination. Core component of multiple cullin-RING-based E3 ubiquitin-protein ligase complexes which mediate the ubiquitination of target proteins. As a scaffold protein may contribute to catalysis through positioning of the substrate and the ubiquitin-conjugating enzyme. The E3 ubiquitin-protein ligase activity of the complex is dependent on the neddylation of the cullin subunit and is inhibited by the association of the deneddylated cullin subunit with TIP120A/CAND1. The functional specificity of the E3 ubiquitin-protein ligase complex depends on the variable substrate recognition component. DCX(DET1-COP1) directs ubiquitination of JUN. DCX(DDB2) directs ubiquitination of XPC. DCX(DDB2) ubiquitinates histones H3-H4 and is required for efficient histone deposition during replication-coupled (H3.1) and replication-independent (H3.3) nucleosome assembly, probably by facilitating the transfer of H3 from ASF1A/ASF1B to other chaperones involved in histone deposition. DCX(DTL) plays a role in PCNA-dependent polyubiquitination of CDT1 and MDM2-dependent ubiquitination of p53/TP53 in response to radiation-induced DNA damage and during DNA replication. DCX(DTL) directs autoubiquitination of DTL. In association with DDB1 and SKP2 probably is involved in ubiquitination of CDKN1B/p27kip. Is involved in ubiquitination of HOXA9. The DDB1-CUL4A-DTL E3 ligase complex regulates the circadian clock function by mediating the ubiquitination and degradation of CRY1. The DCX(ERCC8) complex (also named CSA complex) plays a role in transcription-coupled repair (TCR). A number of DCX complexes (containing either TRPC4AP or DCAF12 as substrate-recognition component) are part of the DesCEND (destruction via C-end degrons) pathway, which recognizes a C-degron located at the extreme C terminus of target proteins, leading to their ubiquitination and degradation. With CUL4B, contributes to ribosome biogenesis. The DCX(AMBRA1) complex is a master regulator of the transition from G1 to S cell phase by mediating ubiquitination of phosphorylated cyclin-D (CCND1, CCND2 and CCND3). The DCX(AMBRA1) complex also acts as a regulator of Cul5-RING (CRL5) E3 ubiquitin-protein ligase complexes by mediating ubiquitination and degradation of Elongin-C (ELOC) component of CRL5 complexes. This Mus musculus (Mouse) protein is Cullin-4A.